The following is a 313-amino-acid chain: 4-hydroxy-3-methylbut-2-enyl diphosphate reductase (313 aa).

[4Fe-4S] cluster is bound at residue Cys12. (2E)-4-hydroxy-3-methylbut-2-enyl diphosphate-binding residues include His41 and His74. 2 residues coordinate dimethylallyl diphosphate: His41 and His74. 2 residues coordinate isopentenyl diphosphate: His41 and His74. Cys96 is a binding site for [4Fe-4S] cluster. (2E)-4-hydroxy-3-methylbut-2-enyl diphosphate is bound at residue His124. A dimethylallyl diphosphate-binding site is contributed by His124. His124 provides a ligand contact to isopentenyl diphosphate. Glu126 (proton donor) is an active-site residue. Thr167 provides a ligand contact to (2E)-4-hydroxy-3-methylbut-2-enyl diphosphate. A [4Fe-4S] cluster-binding site is contributed by Cys197. Positions 225, 226, 227, and 269 each coordinate (2E)-4-hydroxy-3-methylbut-2-enyl diphosphate. Residues Ser225, Ser226, Asn227, and Ser269 each contribute to the dimethylallyl diphosphate site. Isopentenyl diphosphate-binding residues include Ser225, Ser226, Asn227, and Ser269.

This sequence belongs to the IspH family. The cofactor is [4Fe-4S] cluster.

It catalyses the reaction isopentenyl diphosphate + 2 oxidized [2Fe-2S]-[ferredoxin] + H2O = (2E)-4-hydroxy-3-methylbut-2-enyl diphosphate + 2 reduced [2Fe-2S]-[ferredoxin] + 2 H(+). It carries out the reaction dimethylallyl diphosphate + 2 oxidized [2Fe-2S]-[ferredoxin] + H2O = (2E)-4-hydroxy-3-methylbut-2-enyl diphosphate + 2 reduced [2Fe-2S]-[ferredoxin] + 2 H(+). The protein operates within isoprenoid biosynthesis; dimethylallyl diphosphate biosynthesis; dimethylallyl diphosphate from (2E)-4-hydroxy-3-methylbutenyl diphosphate: step 1/1. Its pathway is isoprenoid biosynthesis; isopentenyl diphosphate biosynthesis via DXP pathway; isopentenyl diphosphate from 1-deoxy-D-xylulose 5-phosphate: step 6/6. In terms of biological role, catalyzes the conversion of 1-hydroxy-2-methyl-2-(E)-butenyl 4-diphosphate (HMBPP) into a mixture of isopentenyl diphosphate (IPP) and dimethylallyl diphosphate (DMAPP). Acts in the terminal step of the DOXP/MEP pathway for isoprenoid precursor biosynthesis. The chain is 4-hydroxy-3-methylbut-2-enyl diphosphate reductase from Methylococcus capsulatus (strain ATCC 33009 / NCIMB 11132 / Bath).